Here is a 484-residue protein sequence, read N- to C-terminus: Protein nucleotidyltransferase YdiU (484 aa).

Residues Gly87, Gly89, Arg90, Lys110, Asp122, Gly123, Arg173, and Arg180 each contribute to the ATP site. The active-site Proton acceptor is Asp249. Residues Asn250 and Asp259 each coordinate Mg(2+). Asp259 is an ATP binding site.

It belongs to the SELO family. The cofactor is Mg(2+). Mn(2+) is required as a cofactor.

The catalysed reaction is L-seryl-[protein] + ATP = 3-O-(5'-adenylyl)-L-seryl-[protein] + diphosphate. It catalyses the reaction L-threonyl-[protein] + ATP = 3-O-(5'-adenylyl)-L-threonyl-[protein] + diphosphate. It carries out the reaction L-tyrosyl-[protein] + ATP = O-(5'-adenylyl)-L-tyrosyl-[protein] + diphosphate. The enzyme catalyses L-histidyl-[protein] + UTP = N(tele)-(5'-uridylyl)-L-histidyl-[protein] + diphosphate. The catalysed reaction is L-seryl-[protein] + UTP = O-(5'-uridylyl)-L-seryl-[protein] + diphosphate. It catalyses the reaction L-tyrosyl-[protein] + UTP = O-(5'-uridylyl)-L-tyrosyl-[protein] + diphosphate. Its function is as follows. Nucleotidyltransferase involved in the post-translational modification of proteins. It can catalyze the addition of adenosine monophosphate (AMP) or uridine monophosphate (UMP) to a protein, resulting in modifications known as AMPylation and UMPylation. The chain is Protein nucleotidyltransferase YdiU from Alcanivorax borkumensis (strain ATCC 700651 / DSM 11573 / NCIMB 13689 / SK2).